We begin with the raw amino-acid sequence, 259 residues long: 3-methyl-2-oxobutanoate hydroxymethyltransferase (259 aa).

Mg(2+)-binding residues include Asp44 and Asp83. 3-methyl-2-oxobutanoate-binding positions include 44-45, Asp83, and Lys112; that span reads DS. Glu114 contributes to the Mg(2+) binding site. Catalysis depends on Glu177, which acts as the Proton acceptor.

This sequence belongs to the PanB family. In terms of assembly, homodecamer; pentamer of dimers. The cofactor is Mg(2+).

Its subcellular location is the cytoplasm. The enzyme catalyses 3-methyl-2-oxobutanoate + (6R)-5,10-methylene-5,6,7,8-tetrahydrofolate + H2O = 2-dehydropantoate + (6S)-5,6,7,8-tetrahydrofolate. Its pathway is cofactor biosynthesis; (R)-pantothenate biosynthesis; (R)-pantoate from 3-methyl-2-oxobutanoate: step 1/2. Catalyzes the reversible reaction in which hydroxymethyl group from 5,10-methylenetetrahydrofolate is transferred onto alpha-ketoisovalerate to form ketopantoate. The polypeptide is 3-methyl-2-oxobutanoate hydroxymethyltransferase (Nitratiruptor sp. (strain SB155-2)).